The primary structure comprises 397 residues: MEKQEDFKLNTHSAVYYHWRVWELTGLMRPPGVSSLLYVVYSITVNLVVTVLFPLSLLARLLFTTNMAGLCENLTITITDIVANLKFANVYMVRKQLHEIRSLLRLMDARARLVGDPEEISALRKEVNIAQGTFRTFASIFVFGTTLSCVRVVVRPDRELLYPAWFGVDWMHSTRNYVLINIYQLFGLIVQAIQNCASDSYPPAFLCLLTGHMRALELRVRRIGCRTEKSNKGQTYEAWREEVYQELIECIRDLARVHRLREIIQRVLSVPCMAQFVCSAAVQCTVAMHFLYVADDHDHTAMIISIVFFSAVTLEVFVICYFGDRMRTQSEALCDAFYDCNWIEQLPKFKRELLFTLARTQRPSLIYAGNYIALSLETFEQVMRFTYSVFTLLLRAK.

Topologically, residues 1 to 38 (MEKQEDFKLNTHSAVYYHWRVWELTGLMRPPGVSSLLY) are cytoplasmic. The helical transmembrane segment at 39 to 59 (VVYSITVNLVVTVLFPLSLLA) threads the bilayer. The Extracellular portion of the chain corresponds to 60–72 (RLLFTTNMAGLCE). A helical transmembrane segment spans residues 73–92 (NLTITITDIVANLKFANVYM). The Cytoplasmic segment spans residues 93–131 (VRKQLHEIRSLLRLMDARARLVGDPEEISALRKEVNIAQ). A helical transmembrane segment spans residues 132-150 (GTFRTFASIFVFGTTLSCV). The Extracellular portion of the chain corresponds to 151-176 (RVVVRPDRELLYPAWFGVDWMHSTRN). A helical transmembrane segment spans residues 177–197 (YVLINIYQLFGLIVQAIQNCA). Over 198 to 272 (SDSYPPAFLC…IIQRVLSVPC (75 aa)) the chain is Cytoplasmic. The helical transmembrane segment at 273-293 (MAQFVCSAAVQCTVAMHFLYV) threads the bilayer. Residues 294-301 (ADDHDHTA) lie on the Extracellular side of the membrane. The chain crosses the membrane as a helical span at residues 302–322 (MIISIVFFSAVTLEVFVICYF). Residues 323–363 (GDRMRTQSEALCDAFYDCNWIEQLPKFKRELLFTLARTQRP) lie on the Cytoplasmic side of the membrane. The chain crosses the membrane as a helical span at residues 364–383 (SLIYAGNYIALSLETFEQVM). Residues 384–397 (RFTYSVFTLLLRAK) lie on the Extracellular side of the membrane.

This sequence belongs to the insect chemoreceptor superfamily. Heteromeric odorant receptor channel (TC 1.A.69) family. Or2a subfamily. As to quaternary structure, interacts with Orco. Complexes exist early in the endomembrane system in olfactory sensory neurons (OSNs), coupling these complexes to the conserved ciliary trafficking pathway. In terms of tissue distribution, expressed in 20 sensory neurons on the distal edge of the antenna.

It is found in the cell membrane. Odorant receptor which mediates acceptance or avoidance behavior, depending on its substrates. The odorant receptor repertoire encodes a large collection of odor stimuli that vary widely in identity, intensity, and duration. May form a complex with Orco to form odorant-sensing units, providing sensitive and prolonged odorant signaling and calcium permeability. The protein is Odorant receptor 2a (Or2a) of Drosophila melanogaster (Fruit fly).